Here is a 390-residue protein sequence, read N- to C-terminus: Probable tRNA sulfurtransferase (390 aa).

One can recognise a THUMP domain in the interval 58-161; the sequence is EAVARRLQRV…DEGAYIYSRI (104 aa). ATP-binding positions include 179–180, 204–205, arginine 261, glycine 283, and glutamine 292; these read LI and HF.

The protein belongs to the ThiI family.

The protein localises to the cytoplasm. The catalysed reaction is [ThiI sulfur-carrier protein]-S-sulfanyl-L-cysteine + a uridine in tRNA + 2 reduced [2Fe-2S]-[ferredoxin] + ATP + H(+) = [ThiI sulfur-carrier protein]-L-cysteine + a 4-thiouridine in tRNA + 2 oxidized [2Fe-2S]-[ferredoxin] + AMP + diphosphate. It carries out the reaction [ThiS sulfur-carrier protein]-C-terminal Gly-Gly-AMP + S-sulfanyl-L-cysteinyl-[cysteine desulfurase] + AH2 = [ThiS sulfur-carrier protein]-C-terminal-Gly-aminoethanethioate + L-cysteinyl-[cysteine desulfurase] + A + AMP + 2 H(+). Its pathway is cofactor biosynthesis; thiamine diphosphate biosynthesis. Catalyzes the ATP-dependent transfer of a sulfur to tRNA to produce 4-thiouridine in position 8 of tRNAs, which functions as a near-UV photosensor. Also catalyzes the transfer of sulfur to the sulfur carrier protein ThiS, forming ThiS-thiocarboxylate. This is a step in the synthesis of thiazole, in the thiamine biosynthesis pathway. The sulfur is donated as persulfide by IscS. The polypeptide is Probable tRNA sulfurtransferase (Moorella thermoacetica (strain ATCC 39073 / JCM 9320)).